The sequence spans 245 residues: Octanoyltransferase (245 aa).

The region spanning 54–242 (KTAHEQVWLL…AFEKIFGPTI (189 aa)) is the BPL/LPL catalytic domain. Residues 93 to 100 (RGGEFTYH), 173 to 175 (AIG), and 186 to 188 (GVS) contribute to the substrate site. The Acyl-thioester intermediate role is filled by C204.

The protein belongs to the LipB family.

The protein localises to the cytoplasm. It catalyses the reaction octanoyl-[ACP] + L-lysyl-[protein] = N(6)-octanoyl-L-lysyl-[protein] + holo-[ACP] + H(+). It functions in the pathway protein modification; protein lipoylation via endogenous pathway; protein N(6)-(lipoyl)lysine from octanoyl-[acyl-carrier-protein]: step 1/2. Functionally, catalyzes the transfer of endogenously produced octanoic acid from octanoyl-acyl-carrier-protein onto the lipoyl domains of lipoate-dependent enzymes. Lipoyl-ACP can also act as a substrate although octanoyl-ACP is likely to be the physiological substrate. The sequence is that of Octanoyltransferase from Bartonella tribocorum (strain CIP 105476 / IBS 506).